Reading from the N-terminus, the 305-residue chain is NAD kinase 2 (305 aa).

Aspartate 78 functions as the Proton acceptor in the catalytic mechanism. NAD(+) is bound by residues 78 to 79, 152 to 153, aspartate 182, 193 to 198, and asparagine 251; these read DG, NE, and TAYSLS.

The protein belongs to the NAD kinase family. The cofactor is a divalent metal cation.

The protein localises to the cytoplasm. The enzyme catalyses NAD(+) + ATP = ADP + NADP(+) + H(+). Functionally, involved in the regulation of the intracellular balance of NAD and NADP, and is a key enzyme in the biosynthesis of NADP. Catalyzes specifically the phosphorylation on 2'-hydroxyl of the adenosine moiety of NAD to yield NADP. The polypeptide is NAD kinase 2 (Trichormus variabilis (strain ATCC 29413 / PCC 7937) (Anabaena variabilis)).